The following is a 370-amino-acid chain: Ubiquitin carboxyl-terminal hydrolase 12 (370 aa).

The short motif at 1 to 4 is the Required for plasma membrane localization of USP12/WDR20 element; sequence MEIL. Positions 39 to 369 constitute a USP domain; sequence FGLVNFGNTC…SGYILFYQSR (331 aa). Catalysis depends on cysteine 48, which acts as the Nucleophile. Positions 146-157 are enriched in basic and acidic residues; it reads QEKQNGRLRNGD. The disordered stretch occupies residues 146–168; sequence QEKQNGRLRNGDVDNEDNNSTPD. Zn(2+) contacts are provided by cysteine 186, cysteine 189, cysteine 233, and cysteine 236. Histidine 317 serves as the catalytic Proton acceptor.

The protein belongs to the peptidase C19 family. USP12/USP46 subfamily. As to quaternary structure, interacts with WDR48. Interacts with WDR20; this interaction promotes translocation of the USP12 complex to the plasma membrane. Component of the USP12/WDR20/WDR48 deubiquitinating complex. Component of the USP12/DMWD/WDR48 deubiquitinating complex. Interacts with PHLPP1. Interacts with RBPJ. Interacts with CBP; this interaction blocks the acetyltransferase activity of CREBBP.

It localises to the nucleus. Its subcellular location is the cytoplasm. The protein resides in the cell membrane. It catalyses the reaction Thiol-dependent hydrolysis of ester, thioester, amide, peptide and isopeptide bonds formed by the C-terminal Gly of ubiquitin (a 76-residue protein attached to proteins as an intracellular targeting signal).. Its activity is regulated as follows. Activated by interaction with WDR20; WDR48 and DMWD through different allosteric mechanisms. Deubiquitinating enzyme that plays various roles in the regulation of the immune response and inflammation. During TCR engagement and activation, translocates into the cytoplasm and deubiquitinates its substrates LAT and TRAT1 and prevents their lysosome-dependent degradation to stabilize the TCR signaling complex at the plasma membrane. Plays an essential role in the selective LPS-induced macrophage response through the activation of NF-kappa-B pathway. In addition, promotes that antiviral immune response through targeting DNA sensor IFI16 to inhibit its proteasome-dependent degradation. Participates in the interferon signaling pathway and antiviral response independently of its deubiquitinase activity by maintaining nuclear phosphorylated STAT1 levels via inhibition of its CREBBP-mediated acetylation and subsequent dephosphorylation. Plays an intrinsic role in promoting the differentiation, activation and proliferation of CD4(+) T-cell by activating the NF-kappa-B signaling pathway through deubiquitinating and stabilizing B-cell lymphoma/leukemia 10/BCL10. In myeloid-derived suppressor cells promotes the activation of the NF-kappa-B via deubiquitination and stabilization of RELA. Regulates the 'Lys-63'-linked polyubiquitin chains of BAX and thereby modulates the mitochondrial apoptotic process. Negative regulator of NOTCH signaling that specifically deubiquitinates non-activated NOTCH receptors to target them for lysosomal degradation; deubiquitination of NOTCH stimulates its transport form late endosomes to lysosomes. Protects neurons against HTT/huntingtin-induced polyglutamine expansion-dependent neurodegeneration through regulation of autophagic flux. This function is independent of deubiquitinase activity or of other components of the USP12-WDR20-WDR48 deubiquitinating complex. In complex with WDR48, acts as a potential tumor suppressor by positively regulating PHLPP1 stability. The protein is Ubiquitin carboxyl-terminal hydrolase 12 (Usp12) of Mus musculus (Mouse).